The sequence spans 277 residues: Small ribosomal subunit protein uS2 (277 aa).

A disordered region spans residues 226 to 277 (GQQARADRGEDLGAAVEPVAEPALVEEAAAPVTEDEQVPAEAAAETERQSDA). Residues 239–257 (AAVEPVAEPALVEEAAAPV) are compositionally biased toward low complexity.

This sequence belongs to the universal ribosomal protein uS2 family.

This is Small ribosomal subunit protein uS2 from Sphingopyxis alaskensis (strain DSM 13593 / LMG 18877 / RB2256) (Sphingomonas alaskensis).